The primary structure comprises 89 residues: Small ribosomal subunit protein uS15 (89 aa).

This sequence belongs to the universal ribosomal protein uS15 family. In terms of assembly, part of the 30S ribosomal subunit. Forms a bridge to the 50S subunit in the 70S ribosome, contacting the 23S rRNA.

Its function is as follows. One of the primary rRNA binding proteins, it binds directly to 16S rRNA where it helps nucleate assembly of the platform of the 30S subunit by binding and bridging several RNA helices of the 16S rRNA. In terms of biological role, forms an intersubunit bridge (bridge B4) with the 23S rRNA of the 50S subunit in the ribosome. In Streptococcus pneumoniae (strain P1031), this protein is Small ribosomal subunit protein uS15.